Here is a 745-residue protein sequence, read N- to C-terminus: 1,4-alpha-glucan branching enzyme GlgB (745 aa).

Aspartate 416 functions as the Nucleophile in the catalytic mechanism. Catalysis depends on glutamate 469, which acts as the Proton donor.

This sequence belongs to the glycosyl hydrolase 13 family. GlgB subfamily. In terms of assembly, monomer.

The catalysed reaction is Transfers a segment of a (1-&gt;4)-alpha-D-glucan chain to a primary hydroxy group in a similar glucan chain.. The protein operates within glycan biosynthesis; glycogen biosynthesis. Its function is as follows. Catalyzes the formation of the alpha-1,6-glucosidic linkages in glycogen by scission of a 1,4-alpha-linked oligosaccharide from growing alpha-1,4-glucan chains and the subsequent attachment of the oligosaccharide to the alpha-1,6 position. This chain is 1,4-alpha-glucan branching enzyme GlgB, found in Shewanella sp. (strain W3-18-1).